The primary structure comprises 144 residues: Large ribosomal subunit protein uL13 (144 aa).

The protein belongs to the universal ribosomal protein uL13 family. In terms of assembly, part of the 50S ribosomal subunit.

Functionally, this protein is one of the early assembly proteins of the 50S ribosomal subunit, although it is not seen to bind rRNA by itself. It is important during the early stages of 50S assembly. The chain is Large ribosomal subunit protein uL13 from Clostridium perfringens (strain ATCC 13124 / DSM 756 / JCM 1290 / NCIMB 6125 / NCTC 8237 / Type A).